A 181-amino-acid chain; its full sequence is Transcription termination/antitermination protein NusG (181 aa).

In terms of domain architecture, KOW spans 130 to 161 (PGEMIRVNDGPFADFNGVVEEVDYEKSRLKVS).

Belongs to the NusG family. Monomer. Interacts with the transcription termination factor Rho and with RNA polymerase.

Functionally, participates in transcription elongation, termination and antitermination. In the absence of Rho, increases the rate of transcription elongation by the RNA polymerase (RNAP), probably by partially suppressing pausing. In the presence of Rho, modulates most Rho-dependent termination events by interacting with the RNAP to render the complex more susceptible to the termination activity of Rho. May be required to overcome a kinetic limitation of Rho to function at certain terminators. Also involved in ribosomal RNA transcriptional antitermination. The chain is Transcription termination/antitermination protein NusG from Buchnera aphidicola subsp. Acyrthosiphon pisum (strain APS) (Acyrthosiphon pisum symbiotic bacterium).